Reading from the N-terminus, the 35-residue chain is Pheromone-binding protein (35 aa).

Belongs to the PBP/GOBP family. Antenna.

This major soluble protein in olfactory sensilla of male moths might serve to solubilize the extremely hydrophobic pheromone molecules and to transport pheromone through the aqueous lymph to receptors located on olfactory cilia. The polypeptide is Pheromone-binding protein (Hyalophora cecropia (Cecropia moth)).